Reading from the N-terminus, the 217-residue chain is Deoxyribose-phosphate aldolase 1 (217 aa).

D89 acts as the Proton donor/acceptor in catalysis. K151 functions as the Schiff-base intermediate with acetaldehyde in the catalytic mechanism. K180 (proton donor/acceptor) is an active-site residue.

The protein belongs to the DeoC/FbaB aldolase family. DeoC type 1 subfamily.

The protein localises to the cytoplasm. It carries out the reaction 2-deoxy-D-ribose 5-phosphate = D-glyceraldehyde 3-phosphate + acetaldehyde. It functions in the pathway carbohydrate degradation; 2-deoxy-D-ribose 1-phosphate degradation; D-glyceraldehyde 3-phosphate and acetaldehyde from 2-deoxy-alpha-D-ribose 1-phosphate: step 2/2. Catalyzes a reversible aldol reaction between acetaldehyde and D-glyceraldehyde 3-phosphate to generate 2-deoxy-D-ribose 5-phosphate. The polypeptide is Deoxyribose-phosphate aldolase 1 (Cutibacterium acnes (strain DSM 16379 / KPA171202) (Propionibacterium acnes)).